Reading from the N-terminus, the 192-residue chain is Mitochondrial import inner membrane translocase subunit Tim22 (192 aa).

Cystine bridges form between C67–C139 and C158–C177. Helical transmembrane passes span V72–I92, Y123–V141, and A168–D188.

Belongs to the Tim17/Tim22/Tim23 family. As to quaternary structure, component of the TIM22 complex, whose core is composed of TIMM22, associated with peripheral protein FXC1/TIMM10B and the 70 kDa heterohexamer. In most cases, the 70 kDa complex is composed of TIMM9 and TIMM10 (TIMM10A or TIMM10B). A small fraction of the 70 kDa complex is composed of TIMM8 (TIMM8A/DDP1 or TIMM8B/DDP2) and TIMM13. The TIM22 complex also contains AGK and TIMM29. Interacts directly with TIMM9, TIMM10A and FXC1/TIMM10B. Interacts (when oxidized) with TIMM29; interaction is direct. In terms of processing, disulfide bonds promote efficient assembly of the TIM22 complex.

It is found in the mitochondrion inner membrane. Essential core component of the TIM22 complex, a complex that mediates the import and insertion of multi-pass transmembrane proteins into the mitochondrial inner membrane. In the TIM22 complex, it constitutes the voltage-activated and signal-gated channel. Forms a twin-pore translocase that uses the membrane potential as external driving force in 2 voltage-dependent steps. The protein is Mitochondrial import inner membrane translocase subunit Tim22 (Timm22) of Rattus norvegicus (Rat).